A 100-amino-acid chain; its full sequence is Small ribosomal subunit protein uS14c (100 aa).

The protein belongs to the universal ribosomal protein uS14 family. As to quaternary structure, part of the 30S ribosomal subunit.

It is found in the plastid. The protein localises to the chloroplast. Binds 16S rRNA, required for the assembly of 30S particles. In Lepidium virginicum (Virginia pepperweed), this protein is Small ribosomal subunit protein uS14c.